The following is a 505-amino-acid chain: tRNA-2-methylthio-N(6)-dimethylallyladenosine synthase (505 aa).

In terms of domain architecture, MTTase N-terminal spans 10–126; sequence RSYEVRTYGC…LPALLDRARH (117 aa). Residues Cys19, Cys55, Cys89, Cys163, Cys167, and Cys170 each coordinate [4Fe-4S] cluster. The Radical SAM core domain maps to 149-385; it reads RESAYAGWVS…IALQEQITLE (237 aa). The TRAM domain maps to 388–459; sequence QKLVGAEVEL…PHHLVADTPV (72 aa).

The protein belongs to the methylthiotransferase family. MiaB subfamily. Monomer. [4Fe-4S] cluster serves as cofactor.

It localises to the cytoplasm. It carries out the reaction N(6)-dimethylallyladenosine(37) in tRNA + (sulfur carrier)-SH + AH2 + 2 S-adenosyl-L-methionine = 2-methylsulfanyl-N(6)-dimethylallyladenosine(37) in tRNA + (sulfur carrier)-H + 5'-deoxyadenosine + L-methionine + A + S-adenosyl-L-homocysteine + 2 H(+). Its function is as follows. Catalyzes the methylthiolation of N6-(dimethylallyl)adenosine (i(6)A), leading to the formation of 2-methylthio-N6-(dimethylallyl)adenosine (ms(2)i(6)A) at position 37 in tRNAs that read codons beginning with uridine. In Rhodococcus jostii (strain RHA1), this protein is tRNA-2-methylthio-N(6)-dimethylallyladenosine synthase.